Here is a 288-residue protein sequence, read N- to C-terminus: MTLTLAVYGKGGIGKSTTSCNISTALAKRGKKVLQIGCDPKHDSTFTLTGFLIPTIIDTLQEKDFHYEDIWPEDVIYKGYAGVDCVEAGGPPAGAGCGGYVVGETVKLLKELNAFDEYDVILFDVLGDVVCGGFAAPLNYADYCLIVTDNGFDALFAAKRIAASVREKARTHSLRLAGLIGNRTSKRDLIDKYIEAVPMPVLEILPLIEDIRVSRVKGKTLFEMAESDPSLNYVCDYYLNIADQILSQPEGVVPKDAQDRDLFSLLSDFYLNPTQPASQTKELDLMMV.

Residues 12-17 (GIGKST) and lysine 41 contribute to the ATP site. Serine 16 is a Mg(2+) binding site. Residues cysteine 97 and cysteine 131 each contribute to the [4Fe-4S] cluster site. 182–183 (NR) provides a ligand contact to ATP.

The protein belongs to the NifH/BchL/ChlL family. In terms of assembly, homodimer. Protochlorophyllide reductase is composed of three subunits; ChlL, ChlN and ChlB. [4Fe-4S] cluster serves as cofactor.

It catalyses the reaction chlorophyllide a + oxidized 2[4Fe-4S]-[ferredoxin] + 2 ADP + 2 phosphate = protochlorophyllide a + reduced 2[4Fe-4S]-[ferredoxin] + 2 ATP + 2 H2O. It functions in the pathway porphyrin-containing compound metabolism; chlorophyll biosynthesis (light-independent). Component of the dark-operative protochlorophyllide reductase (DPOR) that uses Mg-ATP and reduced ferredoxin to reduce ring D of protochlorophyllide (Pchlide) to form chlorophyllide a (Chlide). This reaction is light-independent. The L component serves as a unique electron donor to the NB-component of the complex, and binds Mg-ATP. In Synechocystis sp. (strain ATCC 27184 / PCC 6803 / Kazusa), this protein is Light-independent protochlorophyllide reductase iron-sulfur ATP-binding protein.